Reading from the N-terminus, the 467-residue chain is Keratin, type 1 cytoskeletal 11 (467 aa).

The head stretch occupies residues 1-100; it reads MSYSSFSIAQ…GGTDFLLGTS (100 aa). The span at 12–30 shows a compositional bias: low complexity; that stretch reads SRVPSLSGTRSSSSYSLKS. A disordered region spans residues 12 to 32; it reads SRVPSLSGTRSSSSYSLKSDL. Residues 101 to 137 are coil 1A; that stretch reads GKEAMQNLNDRLADYLARVRSLEDRNRELEQKIREWY. Residues 101 to 413 enclose the IF rod domain; the sequence is GKEAMQNLND…TLLEGDAGRS (313 aa). The linker 1 stretch occupies residues 138 to 156; that stretch reads EKQGAGTKRKDFSHYFKII. Residues 157 to 248 form a coil 1B region; it reads ADLQNQINAG…SHDEDMKALR (92 aa). The segment at 249–268 is linker 12; it reads SQLGGQVNVEVDAAPAEDLT. A coil 2 region spans residues 269–416; it reads KKLEIIRQRY…EGDAGRSHSS (148 aa). The disordered stretch occupies residues 409–430; the sequence is DAGRSHSSSHLSSTVSKDKVPV. A tail region spans residues 417 to 463; the sequence is SHLSSTVSKDKVPVSSPNVITKVRTIVEEKINGQVISKKEYEGSPDQ.

Belongs to the intermediate filament family. Heterotetramer of two type I and two type II keratins. As to expression, expressed in the outermost cell layers of skin epidermis (at protein level).

The sequence is that of Keratin, type 1 cytoskeletal 11 from Protopterus aethiopicus (Marbled lungfish).